The sequence spans 670 residues: MLDILLPILIFSALALAAIGAVRRIRLWRQGRPSPVPVLRGLAAVPRRYLVDLHHVVARDKVMSNTHVATAGGFVAAMGLAIVVHGLGLAEGVLGWLLLAASATMFAGSLFVARRRRNPPARLSKGPWMRLPKSLMAFSLGIFVVTLPAVGVLPADAGGWLVALVLAAVVAWGLAELVFGMTWGGPMKHAFAGALHLAFHRRPARFSDKRGGEGRSTGLKALDLDDADAPLGVEKPADFTWNQLLGFDACVQCGRCEAVCPAFAAGQPLNPKKLVQDMVVGMVGGSDARYAGSPYPGKPVGEHAGDPHGPIVAREGTALVDAETLWSCTTCRACVEECPMMIEHVDAIVDMRRHLTLEEGATPGKGAEVIDNLIATDNPGGFDPGGRLNWAADLDLPLMADVERAEVLLWLGDGVFDMRNQRTLRALIKVLRAADVDFAVLGNEERDSGDVARRLGDEATFQSLARRNIDTLSRYRFESIVTCDPHSFHVLKNEYGALYPQGQDADYPVWHHSTFINQLIESGRLPLAPGQAQRVTYHDPCYLGRYNGEYEAPRAVLRALGMELVEMQRSGYRSRCCGGGGGAPITDVPGKQRIPDMRMGDVRETQAEQVVVGCPQCTAMLEGVVPPAGNEATAVKDIAEMVAAALDNTPPATPASHDTAASQATEEVLS.

Helical transmembrane passes span 2 to 22 (LDIL…IGAV), 68 to 90 (VATA…LGLA), 94 to 113 (LGWL…LFVA), 135 to 155 (LMAF…VLPA), and 159 to 179 (GWLV…ELVF). 4Fe-4S ferredoxin-type domains lie at 241–271 (WNQL…PLNP) and 316–347 (GTAL…HVDA). Positions 250, 253, 256, 260, 328, 331, 334, and 338 each coordinate [4Fe-4S] cluster. A disordered region spans residues 648–670 (NTPPATPASHDTAASQATEEVLS). A compositionally biased stretch (polar residues) spans 659–670 (TAASQATEEVLS).

It depends on [4Fe-4S] cluster as a cofactor.

It is found in the cell inner membrane. Participates in the electron transfer process during N,N-dimethylglycine (DMG) degradation to sarcosine. Probably transfers the electrons from N,N-dimethylglycine/sarcosine dehydrogenase (DMGDH) to the electron transfer flavoprotein (ETF) EtfA-EtfB. The polypeptide is Probable membrane-anchored ferredoxin csal_0991 (Chromohalobacter salexigens (strain ATCC BAA-138 / DSM 3043 / CIP 106854 / NCIMB 13768 / 1H11)).